A 424-amino-acid polypeptide reads, in one-letter code: ATP-citrate synthase alpha chain protein 3 (424 aa).

The citrate site is built by Asn343, Thr345, and Arg376.

This sequence belongs to the succinate/malate CoA ligase beta subunit family. Heterooctamer of 4 alpha and 4 beta chains.

It localises to the cytoplasm. Its subcellular location is the cytosol. The enzyme catalyses oxaloacetate + acetyl-CoA + ADP + phosphate = citrate + ATP + CoA. ATP citrate-lyase is the primary enzyme responsible for the synthesis of cytosolic acetyl-CoA, used for the elongation of fatty acids and biosynthesis of isoprenoids, flavonoids and malonated derivatives. May supply substrate to the cytosolic acetyl-CoA carboxylase, which generates the malonyl-CoA used for the synthesis of a multitude of compounds, including very long chain fatty acids and flavonoids. Required for normal growth and development and elongation of C18 fatty acids to C20 to C24 fatty acids in seeds. In contrast to all known animal ACL enzymes having a homomeric structure, plant ACLs are composed of alpha and beta chains. The chain is ATP-citrate synthase alpha chain protein 3 (ACLA-3) from Arabidopsis thaliana (Mouse-ear cress).